Consider the following 501-residue polypeptide: Geissoschizine oxidase (501 aa).

The helical transmembrane segment at 1 to 21 (MEFSFSSPLLYILYFLLFFIV) threads the bilayer. Residue Cys442 coordinates heme.

Belongs to the cytochrome P450 family. Heme is required as a cofactor.

It is found in the membrane. The enzyme catalyses (19E)-geissoschizine + reduced [NADPH--hemoprotein reductase] + O2 = akuammicine + formate + oxidized [NADPH--hemoprotein reductase] + H2O + H(+). It functions in the pathway alkaloid biosynthesis. Functionally, a cytochrome P450 monooxygenase involved in the biosynthesis of strychnos monoterpene indole alkaloids (MIAs) natural products, compounds with effects on glucose absorption. Catalyzes the conversion of geissoschizine to akuammicine. This is Geissoschizine oxidase from Alstonia scholaris (Dogbane).